A 213-amino-acid chain; its full sequence is Signal recognition particle sec65 subunit (213 aa).

The segment at 176 to 213 is disordered; sequence MAALAGMGGPAPPMPTPQASSSQRKQKSIEPEYDLDLE.

This sequence belongs to the SRP19 family. In terms of assembly, fungal signal recognition particle consists of a 7S RNA molecule (scR1) and at least six protein subunits: srp72, srp68, srp54, sec65, srp21 and srp14.

It is found in the cytoplasm. Its subcellular location is the nucleus. In terms of biological role, signal-recognition-particle assembly has a crucial role in targeting secretory proteins to the rough endoplasmic reticulum membrane. It must be involved intimately in the translocation of a wide variety of protein substrates. The polypeptide is Signal recognition particle sec65 subunit (sec65) (Schizosaccharomyces pombe (strain 972 / ATCC 24843) (Fission yeast)).